The chain runs to 1213 residues: uncharacterized protein (1213 aa).

Positions 289–390 constitute a PH domain; sequence ATKRQGWLLR…WGSVINNARE (102 aa). The VASt domain occupies 776-945; the sequence is LDDIVFDRVY…EVNFLEKATR (170 aa). 2 helical membrane-spanning segments follow: residues 996-1016 and 1025-1045; these read LFLQ…FHIF and FLVI…FCFG.

The protein localises to the cytoplasm. It localises to the nucleus membrane. The protein resides in the cytoskeleton. It is found in the microtubule organizing center. Its subcellular location is the spindle pole body. This is an uncharacterized protein from Schizosaccharomyces pombe (strain 972 / ATCC 24843) (Fission yeast).